The following is a 406-amino-acid chain: Bifunctional protein GlmU (406 aa).

Positions 1–221 are pyrophosphorylase; it reads MFIILAAGHG…EEEATGINSR (221 aa). UDP-N-acetyl-alpha-D-glucosamine is bound by residues 5–8, Lys19, Gln68, 73–74, 98–100, Gly134, Glu148, Asn162, and Asn219; these read LAAG, GT, and YGD. Mg(2+) is bound at residue Asp100. Mg(2+) is bound at residue Asn219. The tract at residues 222–242 is linker; sequence NDLAKAEFYFQENRRKFFTDS. The interval 243-406 is N-acetyltransferase; it reads GVTLVAPETV…RRKQMVKKIK (164 aa). A UDP-N-acetyl-alpha-D-glucosamine-binding site is contributed by Lys308. The active-site Proton acceptor is the His320. 2 residues coordinate UDP-N-acetyl-alpha-D-glucosamine: Tyr323 and Asn334. Residues Ala337, 343-344, Ala380, and Arg397 each bind acetyl-CoA; that span reads NY.

In the N-terminal section; belongs to the N-acetylglucosamine-1-phosphate uridyltransferase family. It in the C-terminal section; belongs to the transferase hexapeptide repeat family. In terms of assembly, homotrimer. Mg(2+) serves as cofactor.

The protein resides in the cytoplasm. It catalyses the reaction alpha-D-glucosamine 1-phosphate + acetyl-CoA = N-acetyl-alpha-D-glucosamine 1-phosphate + CoA + H(+). The catalysed reaction is N-acetyl-alpha-D-glucosamine 1-phosphate + UTP + H(+) = UDP-N-acetyl-alpha-D-glucosamine + diphosphate. It participates in nucleotide-sugar biosynthesis; UDP-N-acetyl-alpha-D-glucosamine biosynthesis; N-acetyl-alpha-D-glucosamine 1-phosphate from alpha-D-glucosamine 6-phosphate (route II): step 2/2. Its pathway is nucleotide-sugar biosynthesis; UDP-N-acetyl-alpha-D-glucosamine biosynthesis; UDP-N-acetyl-alpha-D-glucosamine from N-acetyl-alpha-D-glucosamine 1-phosphate: step 1/1. It functions in the pathway bacterial outer membrane biogenesis; LPS lipid A biosynthesis. Its function is as follows. Catalyzes the last two sequential reactions in the de novo biosynthetic pathway for UDP-N-acetylglucosamine (UDP-GlcNAc). The C-terminal domain catalyzes the transfer of acetyl group from acetyl coenzyme A to glucosamine-1-phosphate (GlcN-1-P) to produce N-acetylglucosamine-1-phosphate (GlcNAc-1-P), which is converted into UDP-GlcNAc by the transfer of uridine 5-monophosphate (from uridine 5-triphosphate), a reaction catalyzed by the N-terminal domain. This chain is Bifunctional protein GlmU, found in Wolbachia sp. subsp. Brugia malayi (strain TRS).